A 262-amino-acid polypeptide reads, in one-letter code: ATP synthase subunit a (262 aa).

Transmembrane regions (helical) follow at residues 25–45, 86–106, 130–150, 204–226, and 240–260; these read NVHI…LAVF, VAPL…IDLI, DISA…FYTV, LIFI…GIPL, and LQAF…YNKA.

The protein belongs to the ATPase A chain family. In terms of assembly, F-type ATPases have 2 components, CF(1) - the catalytic core - and CF(0) - the membrane proton channel. CF(1) has five subunits: alpha(3), beta(3), gamma(1), delta(1), epsilon(1). CF(0) has three main subunits: a(1), b(2) and c(9-12). The alpha and beta chains form an alternating ring which encloses part of the gamma chain. CF(1) is attached to CF(0) by a central stalk formed by the gamma and epsilon chains, while a peripheral stalk is formed by the delta and b chains.

The protein resides in the cell inner membrane. In terms of biological role, key component of the proton channel; it plays a direct role in the translocation of protons across the membrane. The sequence is that of ATP synthase subunit a from Mannheimia succiniciproducens (strain KCTC 0769BP / MBEL55E).